Here is a 210-residue protein sequence, read N- to C-terminus: Na(+)-translocating NADH-quinone reductase subunit D (210 aa).

A run of 6 helical transmembrane segments spans residues 14–34, 42–62, 72–92, 96–116, 131–151, and 178–198; these read PIIN…ALAV, LVMT…ISLI, IIVQ…VLQA, AISK…IVMG, FMDG…VGVV, and NGLL…IWLI.

Belongs to the NqrDE/RnfAE family. As to quaternary structure, composed of six subunits; NqrA, NqrB, NqrC, NqrD, NqrE and NqrF.

Its subcellular location is the cell inner membrane. The enzyme catalyses a ubiquinone + n Na(+)(in) + NADH + H(+) = a ubiquinol + n Na(+)(out) + NAD(+). Functionally, NQR complex catalyzes the reduction of ubiquinone-1 to ubiquinol by two successive reactions, coupled with the transport of Na(+) ions from the cytoplasm to the periplasm. NqrA to NqrE are probably involved in the second step, the conversion of ubisemiquinone to ubiquinol. This chain is Na(+)-translocating NADH-quinone reductase subunit D, found in Shewanella frigidimarina (strain NCIMB 400).